The chain runs to 247 residues: Probable 2-phosphosulfolactate phosphatase (247 aa).

Belongs to the ComB family. It depends on Mg(2+) as a cofactor.

The catalysed reaction is (2R)-O-phospho-3-sulfolactate + H2O = (2R)-3-sulfolactate + phosphate. The protein is Probable 2-phosphosulfolactate phosphatase of Clostridium perfringens (strain SM101 / Type A).